Here is a 266-residue protein sequence, read N- to C-terminus: Putative carbamate hydrolase RutD (266 aa).

The protein belongs to the AB hydrolase superfamily. Hydrolase RutD family.

The catalysed reaction is carbamate + 2 H(+) = NH4(+) + CO2. Its function is as follows. Involved in pyrimidine catabolism. May facilitate the hydrolysis of carbamate, a reaction that can also occur spontaneously. This chain is Putative carbamate hydrolase RutD, found in Escherichia coli O139:H28 (strain E24377A / ETEC).